The primary structure comprises 843 residues: RNA-binding protein 25 (843 aa).

The interval methionine 1–proline 30 is disordered. A compositionally biased stretch (pro residues) spans methionine 12–proline 30. The region spanning threonine 87–lysine 164 is the RRM domain. An N6-acetyllysine modification is found at lysine 135. Disordered regions lie at residues glutamate 171 to arginine 202 and serine 219 to aspartate 243. Residues serine 226 and serine 229 each carry the phosphoserine modification. Residues lysine 261, lysine 273, and lysine 430 each participate in a glycyl lysine isopeptide (Lys-Gly) (interchain with G-Cter in SUMO2) cross-link. Basic and acidic residues-rich tracts occupy residues glutamate 280–arginine 433 and arginine 521–arginine 573. Disordered stretches follow at residues glutamate 280–glutamate 442 and glutamate 498–lysine 688. A necessary for nuclear speckle localization region spans residues arginine 285–cysteine 644. Lysine 578 is covalently cross-linked (Glycyl lysine isopeptide (Lys-Gly) (interchain with G-Cter in SUMO2)). Serine 583 bears the Phosphoserine mark. Over residues lysine 590 to glutamate 599 the composition is skewed to basic and acidic residues. Over residues serine 621–serine 630 the composition is skewed to low complexity. A Glycyl lysine isopeptide (Lys-Gly) (interchain with G-Cter in SUMO2) cross-link involves residue lysine 671. Residues alanine 674 to serine 683 show a composition bias toward polar residues. Residues serine 677 and serine 683 each carry the phosphoserine modification. Glycyl lysine isopeptide (Lys-Gly) (interchain with G-Cter in SUMO2) cross-links involve residues lysine 688 and lysine 697. Serine 703 is subject to Phosphoserine. Lysine 722 is covalently cross-linked (Glycyl lysine isopeptide (Lys-Gly) (interchain with G-Cter in SUMO2)). The region spanning proline 750–lysine 843 is the PWI domain.

In terms of assembly, interacts with LUC7L3 and SRRM1. Specifically associates with functional splicing complexes, including Sm proteins and U1, U2, U4, U5 and U6 snRNAs. Associates with exon junction complex (EJC) proteins, including APEX1, DDX39B, NCBP1, RBM8A and RNPS1. Interaction with NCBP1 is RNA-dependent. Post-translationally, sumoylated.

It is found in the nucleus speckle. It localises to the cytoplasm. RNA-binding protein that acts as a regulator of alternative pre-mRNA splicing. Involved in apoptotic cell death through the regulation of the apoptotic factor BCL2L1 isoform expression. Modulates the ratio of proapoptotic BCL2L1 isoform S to antiapoptotic BCL2L1 isoform L mRNA expression. When overexpressed, stimulates proapoptotic BCL2L1 isoform S 5'-splice site (5'-ss) selection, whereas its depletion caused the accumulation of antiapoptotic BCL2L1 isoform L. Promotes BCL2L1 isoform S 5'-ss usage through the 5'-CGGGCA-3' RNA sequence. Its association with LUC7L3 promotes U1 snRNP binding to a weak 5' ss in a 5'-CGGGCA-3'-dependent manner. Binds to the exonic splicing enhancer 5'-CGGGCA-3' RNA sequence located within exon 2 of the BCL2L1 pre-mRNA. Also involved in the generation of an abnormal and truncated splice form of SCN5A in heart failure. The sequence is that of RNA-binding protein 25 (RBM25) from Homo sapiens (Human).